Reading from the N-terminus, the 129-residue chain is Small ribosomal subunit protein uS11 (129 aa).

It belongs to the universal ribosomal protein uS11 family. Part of the 30S ribosomal subunit. Interacts with proteins S7 and S18. Binds to IF-3.

In terms of biological role, located on the platform of the 30S subunit, it bridges several disparate RNA helices of the 16S rRNA. Forms part of the Shine-Dalgarno cleft in the 70S ribosome. The protein is Small ribosomal subunit protein uS11 of Nitrosomonas eutropha (strain DSM 101675 / C91 / Nm57).